Reading from the N-terminus, the 364-residue chain is Heavy metal-associated isoprenylated plant protein 35 (364 aa).

The segment covering 1–12 (MATDEMKSETKK) has biased composition (basic and acidic residues). The disordered stretch occupies residues 1–33 (MATDEMKSETKKTEHKQKQSTQIKQDLPPPTIP). Residues 39–102 (YKSCTLKVSI…KLNKAGKNAE (64 aa)) form the HMA domain. Positions 50 and 53 each coordinate a metal cation. The disordered stretch occupies residues 101 to 265 (AEQLPEIPDP…PPTATDYDRP (165 aa)). Basic and acidic residues predominate over residues 111–122 (VDNKPKPVDPKE). Residues 134 to 144 (QITNEATSSGI) show a composition bias toward polar residues. 2 stretches are compositionally biased toward basic and acidic residues: residues 154–169 (ECDK…EKCL) and 180–198 (VKEE…KEES). The span at 237–253 (SLATTNNPTDGPARTQS) shows a compositional bias: polar residues. C361 carries the post-translational modification Cysteine methyl ester. The S-farnesyl cysteine moiety is linked to residue C361. Residues 362–364 (AIM) constitute a propeptide, removed in mature form.

This sequence belongs to the HIPP family.

Its function is as follows. Heavy-metal-binding protein. In Arabidopsis thaliana (Mouse-ear cress), this protein is Heavy metal-associated isoprenylated plant protein 35.